The chain runs to 379 residues: MKLSETLKIDYFRVQLNAWRICGALDLSEGRYWSWSMLLCILVYLPTPMLLRGVYSFEDPVENNFSLSLTVTSLSNLMKFCMYVAQLTKMVEVQSLIGQLDARVSGESQSERHRNMTEHLLRMSKLFQITYAVVFIIAAVPFVFETELSLPMPMWFPFDWKNSMVAYIGALVFQEIGYVFQIMQCFAADSFPPLVLYLISEQCQLLILRISEIGYGYKTLEENEQDLVNCIRDQNALYRLLDVTKSLVSYPMMVQFMVIGINIAITLFVLIFYVETLYDRIYYLCFLLGITVQTYPLCYYGTMVQESFAELHYAVFCSNWVDQSASYRGHMLILAERTKRMQLLLAGNLVPIHLSTYVACWKGAYSFFTLMADRDGLGS.

Over 1–36 the chain is Cytoplasmic; it reads MKLSETLKIDYFRVQLNAWRICGALDLSEGRYWSWS. Residues 37–57 form a helical membrane-spanning segment; that stretch reads MLLCILVYLPTPMLLRGVYSF. At 58-64 the chain is on the extracellular side; that stretch reads EDPVENN. An N-linked (GlcNAc...) asparagine glycan is attached at asparagine 64. The helical transmembrane segment at 65-85 threads the bilayer; sequence FSLSLTVTSLSNLMKFCMYVA. At 86–125 the chain is on the cytoplasmic side; it reads QLTKMVEVQSLIGQLDARVSGESQSERHRNMTEHLLRMSK. A helical membrane pass occupies residues 126–146; that stretch reads LFQITYAVVFIIAAVPFVFET. The Extracellular portion of the chain corresponds to 147–162; the sequence is ELSLPMPMWFPFDWKN. The helical transmembrane segment at 163-183 threads the bilayer; it reads SMVAYIGALVFQEIGYVFQIM. Topologically, residues 184-253 are cytoplasmic; the sequence is QCFAADSFPP…TKSLVSYPMM (70 aa). The chain crosses the membrane as a helical span at residues 254–274; that stretch reads VQFMVIGINIAITLFVLIFYV. The Extracellular portion of the chain corresponds to 275–280; that stretch reads ETLYDR. The chain crosses the membrane as a helical span at residues 281 to 301; the sequence is IYYLCFLLGITVQTYPLCYYG. Residues 302 to 340 lie on the Cytoplasmic side of the membrane; it reads TMVQESFAELHYAVFCSNWVDQSASYRGHMLILAERTKR. A helical transmembrane segment spans residues 341 to 361; sequence MQLLLAGNLVPIHLSTYVACW. Topologically, residues 362–379 are extracellular; sequence KGAYSFFTLMADRDGLGS.

Belongs to the insect chemoreceptor superfamily. Heteromeric odorant receptor channel (TC 1.A.69) family. Or2a subfamily. In terms of assembly, interacts with Orco. Complexes exist early in the endomembrane system in olfactory sensory neurons (OSNs), coupling these complexes to the conserved ciliary trafficking pathway. In terms of tissue distribution, expressed in 10-40 sensory cells in the third antenna segment and in the maxillary palp.

The protein resides in the cell membrane. In terms of biological role, odorant receptor which mediates acceptance or avoidance behavior, depending on its substrates. The odorant receptor repertoire encodes a large collection of odor stimuli that vary widely in identity, intensity, and duration. May form a complex with Orco to form odorant-sensing units, providing sensitive and prolonged odorant signaling and calcium permeability. This chain is Odorant receptor 23a (Or23a), found in Drosophila melanogaster (Fruit fly).